The sequence spans 430 residues: T-kininogen 2 (430 aa).

The N-terminal stretch at 1 to 18 (MKLITILLLCSRLLPSLA) is a signal peptide. Position 19 is a pyrrolidone carboxylic acid (glutamine 19). The region spanning 28–131 (CNDETVFQAV…TQICNITPGK (104 aa)) is the Cystatin kininogen-type 1 domain. Cystine bridges form between cysteine 28–cysteine 404, cysteine 83–cysteine 94, cysteine 107–cysteine 125, cysteine 141–cysteine 144, cysteine 205–cysteine 217, cysteine 228–cysteine 247, cysteine 263–cysteine 266, cysteine 327–cysteine 339, and cysteine 350–cysteine 369. Asparagine 82 carries an N-linked (GlcNAc...) asparagine glycan. The Cystatin kininogen-type 2 domain occupies 150–253 (MDSSDLKPVL…SQSCDLYPGD (104 aa)). Residues asparagine 168 and asparagine 204 are each glycosylated (N-linked (GlcNAc...) asparagine). The Cystatin kininogen-type 3 domain occupies 272-375 (VDSPELKEAL…TVRCQALDMM (104 aa)). Asparagine 326 carries an N-linked (GlcNAc...) asparagine glycan. Positions 410–430 (LSKAGAGPAPDHQAEASTVTP) are disordered.

In terms of processing, as T-kinin is preceded by a Met instead of an Arg or Lys, it is not released from its precursor by either tissue or plasma kallikrein. As to expression, plasma.

The protein resides in the secreted. Its subcellular location is the extracellular space. Its function is as follows. Kininogens are plasma glycoproteins with a number of functions: (1) as precursor of the active peptide bradykinin they effect smooth muscle contraction, induction of hypotension and increase of vascular permeability. (2) They play a role in blood coagulation by helping to position optimally prekallikrein and factor XI next to factor XII. (3) They are inhibitor of thiol proteases. The sequence is that of T-kininogen 2 from Rattus norvegicus (Rat).